A 326-amino-acid polypeptide reads, in one-letter code: DNA-directed RNA polymerase subunit alpha (326 aa).

The alpha N-terminal domain (alpha-NTD) stretch occupies residues 1 to 231; that stretch reads MQSNALLKPR…DQLSVFADLE (231 aa). Positions 245 to 326 are alpha C-terminal domain (alpha-CTD); the sequence is IDPVLLRPVD…WPPAGLEKLG (82 aa).

It belongs to the RNA polymerase alpha chain family. In terms of assembly, homodimer. The RNAP catalytic core consists of 2 alpha, 1 beta, 1 beta' and 1 omega subunit. When a sigma factor is associated with the core the holoenzyme is formed, which can initiate transcription.

The catalysed reaction is RNA(n) + a ribonucleoside 5'-triphosphate = RNA(n+1) + diphosphate. In terms of biological role, DNA-dependent RNA polymerase catalyzes the transcription of DNA into RNA using the four ribonucleoside triphosphates as substrates. The protein is DNA-directed RNA polymerase subunit alpha of Azoarcus sp. (strain BH72).